The sequence spans 445 residues: Crotonyl-CoA reductase (445 aa).

Glutamate 149 is a binding site for Zn(2+).

This sequence belongs to the zinc-containing alcohol dehydrogenase family. Crotonyl-CoA carboxylase/reductase subfamily. Homodimer. Requires Zn(2+) as cofactor.

The catalysed reaction is butanoyl-CoA + NADP(+) = (2E)-butenoyl-CoA + NADPH + H(+). With respect to regulation, inhibited by NADPH at concentrations above 200 uM, by MgCl (30%), by ZnCl(2) (55%), and by CoCl, MnCl and CaCl (100%). Also inhibited by iodoacetamide, N-ethylmaleamide, the thiol group inhibitor beta-chloromercuribenzoate, palmitoyl-CoA and myristoyl-CoA. Functionally, catalyzes the conversion of crotonyl-CoA to butyryl-CoA. It uses only NADP as electron donor. May have a role in providing butyryl-CoA as a starter unit for straight-chain fatty acid biosynthesis. This Streptomyces avermitilis (strain ATCC 31267 / DSM 46492 / JCM 5070 / NBRC 14893 / NCIMB 12804 / NRRL 8165 / MA-4680) protein is Crotonyl-CoA reductase (ccrA2).